The chain runs to 189 residues: Probable UbiX-like flavin prenyltransferase (189 aa).

FMN-binding positions include 9-11 (GAS), S36, 87-90 (SMKT), and R122.

It belongs to the UbiX/PAD1 family. YclB subfamily. In terms of assembly, homododecamer.

It carries out the reaction dimethylallyl phosphate + FMNH2 = prenylated FMNH2 + phosphate. Functionally, involved in the non-oxidative decarboxylation and detoxification of phenolic derivatives under anaerobic conditions. Flavin prenyltransferase that catalyzes the synthesis of the prenylated FMN cofactor (prenyl-FMN) for phenolic acid decarboxylase. This Sedimentibacter hydroxybenzoicus (Clostridium hydroxybenzoicum) protein is Probable UbiX-like flavin prenyltransferase.